Here is a 366-residue protein sequence, read N- to C-terminus: Probable S-adenosyl-L-methionine-binding protein AF_0433 (366 aa).

Residues 6–136 (LRQVGVIRSP…YSSTIDSVGN (131 aa)) form the TsaA-like domain. Residues 23-25 (PHQ), 61-62 (DR), arginine 85, and 116-119 (LDGT) contribute to the S-adenosyl-L-methionine site.

This sequence belongs to the tRNA methyltransferase O family.

The protein is Probable S-adenosyl-L-methionine-binding protein AF_0433 of Archaeoglobus fulgidus (strain ATCC 49558 / DSM 4304 / JCM 9628 / NBRC 100126 / VC-16).